We begin with the raw amino-acid sequence, 334 residues long: Glycerol-3-phosphate dehydrogenase [NAD(P)+] 2 (334 aa).

NADPH is bound by residues Trp-16, Arg-36, Arg-37, and Lys-110. Positions 110 and 140 each coordinate sn-glycerol 3-phosphate. Ala-144 is a binding site for NADPH. 5 residues coordinate sn-glycerol 3-phosphate: Lys-195, Asp-248, Ser-258, Arg-259, and Asn-260. Residue Lys-195 is the Proton acceptor of the active site. Arg-259 is a binding site for NADPH. NADPH is bound by residues Val-282 and Glu-284.

It belongs to the NAD-dependent glycerol-3-phosphate dehydrogenase family.

Its subcellular location is the cytoplasm. The catalysed reaction is sn-glycerol 3-phosphate + NAD(+) = dihydroxyacetone phosphate + NADH + H(+). The enzyme catalyses sn-glycerol 3-phosphate + NADP(+) = dihydroxyacetone phosphate + NADPH + H(+). Its pathway is membrane lipid metabolism; glycerophospholipid metabolism. In terms of biological role, catalyzes the reduction of the glycolytic intermediate dihydroxyacetone phosphate (DHAP) to sn-glycerol 3-phosphate (G3P), the key precursor for phospholipid synthesis. This is Glycerol-3-phosphate dehydrogenase [NAD(P)+] 2 from Mycobacterium tuberculosis (strain ATCC 25618 / H37Rv).